The sequence spans 816 residues: Neuroligin-4, X-linked (816 aa).

A signal peptide spans 1–41; the sequence is MSRPQGLLWLPLLFTPVCVMLNSNVLLWLTALAIKFTLIDS. Residues 42–676 lie on the Extracellular side of the membrane; the sequence is QAQYPVVNTN…TKRDYSTELS (635 aa). A glycan (N-linked (GlcNAc...) asparagine) is linked at Asn102. Disulfide bonds link Cys110–Cys146 and Cys306–Cys317. Residues 359–364 are interaction with NRXN1; sequence QGEFLN. The cysteines at positions 476 and 510 are disulfide-linked. Asn511 is a glycosylation site (N-linked (GlcNAc...) asparagine). The interval 636-659 is disordered; sequence TKRPAITPANNPKHSKDPHKTGPE. Positions 649–658 are enriched in basic and acidic residues; the sequence is HSKDPHKTGP. Residues 677-697 traverse the membrane as a helical segment; that stretch reads VTIAVGASLLFLNILAFAALY. Topologically, residues 698–816 are cytoplasmic; it reads YKKDKRRHET…LPHGHSTTRV (119 aa). Position 712 is a phosphoserine (Ser712).

The protein belongs to the type-B carboxylesterase/lipase family. As to quaternary structure, homodimer. Interacts with NRXN1 in a calcium-dependent manner. Interaction with neurexins is mediated by heparan sulfate glycan modification on neurexin. Interacts through its C-terminus with DLG4/PSD-95 third PDZ domain. In terms of tissue distribution, expressed at highest levels in heart. Expressed at lower levels in liver, skeletal muscle and pancreas and at very low levels in brain.

The protein resides in the cell membrane. It localises to the postsynaptic density membrane. Functionally, cell surface protein involved in cell-cell-interactions via its interactions with neurexin family members. The protein is Neuroligin-4, X-linked (NLGN4X) of Homo sapiens (Human).